A 774-amino-acid chain; its full sequence is Lysyl oxidase homolog 2 (774 aa).

Residues 1–25 (MERPLCSHLCSCLAVLALLSPLSLA) form the signal peptide. SRCR domains are found at residues 58–159 (LRLA…VVCS), 188–302 (IRAI…VSCV), 326–425 (VRLR…VRCN), and 435–544 (LRLN…VACS). Cystine bridges form between cysteine 84–cysteine 148, cysteine 97–cysteine 158, cysteine 128–cysteine 138, cysteine 218–cysteine 291, cysteine 231–cysteine 301, cysteine 265–cysteine 275, cysteine 351–cysteine 414, cysteine 364–cysteine 424, and cysteine 395–cysteine 405. N-linked (GlcNAc...) asparagine glycosylation occurs at asparagine 288. An N-linked (GlcNAc...) asparagine glycan is attached at asparagine 455. Disulfide bonds link cysteine 464/cysteine 530, cysteine 477/cysteine 543, and cysteine 511/cysteine 521. A lysyl-oxidase like region spans residues 548–751 (PDLVLNAEMV…WMYNCHIGGS (204 aa)). Residues aspartate 549 and leucine 550 each contribute to the Ca(2+) site. Cystine bridges form between cysteine 573–cysteine 625, cysteine 579–cysteine 695, cysteine 657–cysteine 673, and cysteine 663–cysteine 685. Histidine 626, histidine 628, and histidine 630 together coordinate Cu cation. N-linked (GlcNAc...) asparagine glycosylation is present at asparagine 644. Positions 653-689 (KASFCLEDTECEGDIQKNYECANFGDQGITMGCWDMY) form a cross-link, lysine tyrosylquinone (Lys-Tyr). Tyrosine 689 is modified (2',4',5'-topaquinone). The Ca(2+) site is built by glutamate 722, aspartate 724, asparagine 727, and asparagine 728. Cysteine 732 and cysteine 746 form a disulfide bridge.

Belongs to the lysyl oxidase family. As to quaternary structure, component of some chromatin repressor complex. Interacts with SNAI1. Interacts with TAF10. Interacts with HSPA5. Interacts with EFEMP2. Requires Cu cation as cofactor. It depends on lysine tyrosylquinone residue as a cofactor. Post-translationally, the lysine tyrosylquinone cross-link (LTQ) is generated by condensation of the epsilon-amino group of a lysine with a topaquinone produced by oxidation of tyrosine. N-glycosylated. N-glycosylation on Asn-455 and Asn-644 may be essential for proper folding and secretion; may be composed of a fucosylated carbohydrates attached to a trimannose N-linked glycan core.

It is found in the secreted. It localises to the extracellular space. Its subcellular location is the extracellular matrix. The protein localises to the basement membrane. The protein resides in the nucleus. It is found in the chromosome. It localises to the endoplasmic reticulum. The catalysed reaction is L-lysyl-[protein] + O2 + H2O = (S)-2-amino-6-oxohexanoyl-[protein] + H2O2 + NH4(+). With respect to regulation, specifically inhibited by a mouse monoclonal antibody AB0023, inhibition occurs in a non-competitive manner. Functionally, mediates the post-translational oxidative deamination of lysine residues on target proteins leading to the formation of deaminated lysine (allysine). Acts as a transcription corepressor and specifically mediates deamination of trimethylated 'Lys-4' of histone H3 (H3K4me3), a specific tag for epigenetic transcriptional activation. Shows no activity against histone H3 when it is trimethylated on 'Lys-9' (H3K9me3) or 'Lys-27' (H3K27me3) or when 'Lys-4' is monomethylated (H3K4me1) or dimethylated (H3K4me2). Also mediates deamination of methylated TAF10, a member of the transcription factor IID (TFIID) complex, which induces release of TAF10 from promoters, leading to inhibition of TFIID-dependent transcription. LOXL2-mediated deamination of TAF10 results in transcriptional repression of genes required for embryonic stem cell pluripotency including POU5F1/OCT4, NANOG, KLF4 and SOX2. Involved in epithelial to mesenchymal transition (EMT) via interaction with SNAI1 and participates in repression of E-cadherin CDH1, probably by mediating deamination of histone H3. During EMT, involved with SNAI1 in negatively regulating pericentromeric heterochromatin transcription. SNAI1 recruits LOXL2 to pericentromeric regions to oxidize histone H3 and repress transcription which leads to release of heterochromatin component CBX5/HP1A, enabling chromatin reorganization and acquisition of mesenchymal traits. Interacts with the endoplasmic reticulum protein HSPA5 which activates the IRE1-XBP1 pathway of the unfolded protein response, leading to expression of several transcription factors involved in EMT and subsequent EMT induction. When secreted into the extracellular matrix, promotes cross-linking of extracellular matrix proteins by mediating oxidative deamination of peptidyl lysine residues in precursors to fibrous collagen and elastin. Acts as a regulator of sprouting angiogenesis, probably via collagen IV scaffolding. Acts as a regulator of chondrocyte differentiation, probably by regulating expression of factors that control chondrocyte differentiation. The protein is Lysyl oxidase homolog 2 (LOXL2) of Pongo abelii (Sumatran orangutan).